The sequence spans 217 residues: UPF0319 protein HS_1349 (217 aa).

The N-terminal stretch at 1–21 is a signal peptide; it reads MKFSFAALASAMLLTSTAAFA.

The protein belongs to the UPF0319 family.

This is UPF0319 protein HS_1349 from Histophilus somni (strain 129Pt) (Haemophilus somnus).